The sequence spans 419 residues: Acyl-[acyl-carrier-protein] desaturase 6, chloroplastic (419 aa).

The N-terminal 54 residues, M1–S54, are a transit peptide targeting the chloroplast. Residues E151, E189, H192, E242, E277, and H280 each contribute to the Fe cation site.

The protein belongs to the fatty acid desaturase type 2 family. As to quaternary structure, homodimer. Fe(2+) serves as cofactor.

The protein localises to the plastid. It is found in the chloroplast. It functions in the pathway lipid metabolism; fatty acid metabolism. Its function is as follows. Introduces a cis double bond in the acyl chain of an acyl-[acyl-carrier protein]. The sequence is that of Acyl-[acyl-carrier-protein] desaturase 6, chloroplastic from Oryza sativa subsp. japonica (Rice).